Reading from the N-terminus, the 128-residue chain is Ribonuclease P protein component (128 aa).

It belongs to the RnpA family. As to quaternary structure, consists of a catalytic RNA component (M1 or rnpB) and a protein subunit.

It carries out the reaction Endonucleolytic cleavage of RNA, removing 5'-extranucleotides from tRNA precursor.. Its function is as follows. RNaseP catalyzes the removal of the 5'-leader sequence from pre-tRNA to produce the mature 5'-terminus. It can also cleave other RNA substrates such as 4.5S RNA. The protein component plays an auxiliary but essential role in vivo by binding to the 5'-leader sequence and broadening the substrate specificity of the ribozyme. The chain is Ribonuclease P protein component from Mycoplasma genitalium (strain ATCC 33530 / DSM 19775 / NCTC 10195 / G37) (Mycoplasmoides genitalium).